A 207-amino-acid polypeptide reads, in one-letter code: MSNPFAGNTDPISNALIPMVVEQTAKGERSYDIYSRLLKERVIFLTGPVEDHVANVIAAQLLFLESESPEKDIFIYINSPGGSISAGMAIYDTMQFIKPDVSTVCMGMAASMGAFLLASGAPGKRHCLPNAKVMIHQPLGGFQGQASDFEIHAKEILATKHRMNELLAFHTGKDIEIIAQDTDRDNFMRASEAVEYGIVDSVLTHRK.

Serine 111 acts as the Nucleophile in catalysis. Histidine 136 is an active-site residue.

It belongs to the peptidase S14 family. Fourteen ClpP subunits assemble into 2 heptameric rings which stack back to back to give a disk-like structure with a central cavity, resembling the structure of eukaryotic proteasomes.

It localises to the cytoplasm. The catalysed reaction is Hydrolysis of proteins to small peptides in the presence of ATP and magnesium. alpha-casein is the usual test substrate. In the absence of ATP, only oligopeptides shorter than five residues are hydrolyzed (such as succinyl-Leu-Tyr-|-NHMec, and Leu-Tyr-Leu-|-Tyr-Trp, in which cleavage of the -Tyr-|-Leu- and -Tyr-|-Trp bonds also occurs).. In terms of biological role, cleaves peptides in various proteins in a process that requires ATP hydrolysis. Has a chymotrypsin-like activity. Plays a major role in the degradation of misfolded proteins. The protein is ATP-dependent Clp protease proteolytic subunit of Psychromonas ingrahamii (strain DSM 17664 / CCUG 51855 / 37).